The chain runs to 41 residues: Large ribosomal subunit protein bL36 (41 aa).

It belongs to the bacterial ribosomal protein bL36 family.

The polypeptide is Large ribosomal subunit protein bL36 (Gluconacetobacter diazotrophicus (strain ATCC 49037 / DSM 5601 / CCUG 37298 / CIP 103539 / LMG 7603 / PAl5)).